The sequence spans 229 residues: Cytidylate kinase (229 aa).

12–20 (GPSGAGKGT) lines the ATP pocket.

The protein belongs to the cytidylate kinase family. Type 1 subfamily.

It localises to the cytoplasm. The enzyme catalyses CMP + ATP = CDP + ADP. It carries out the reaction dCMP + ATP = dCDP + ADP. The protein is Cytidylate kinase of Pseudomonas aeruginosa (strain UCBPP-PA14).